A 798-amino-acid chain; its full sequence is Nuclear intron maturase 4, mitochondrial (798 aa).

Residues 1–16 (MFRKRNLVLDLLRRCY) constitute a mitochondrion transit peptide. Positions 578–665 (VVAPTNAIGR…AAKYRIHENE (88 aa)) are intron maturase type-2. Residues 729–778 (CFVIGCSMAAPAVYTLHAMERQKFPGWKTGFSVCIPSSLNGRRIGLCKQH) form a THAP-type zinc finger.

The protein belongs to the plant nuclear intron maturase (nMat) family.

The protein resides in the mitochondrion. It is found in the plastid. The protein localises to the chloroplast. Its function is as follows. Nuclear-encoded maturase required for splicing of group-II introns in mitochondria. Involved in NAD1 pre-mRNA processing and maturation of introns 1, 3 and 4. Necessary for mitochondrial biogenesis during early developmental stages. Essential for respiratory holocomplex I biogenesis in mitochondria. The sequence is that of Nuclear intron maturase 4, mitochondrial from Arabidopsis thaliana (Mouse-ear cress).